Here is a 95-residue protein sequence, read N- to C-terminus: Aspartyl/glutamyl-tRNA(Asn/Gln) amidotransferase subunit C (95 aa).

This sequence belongs to the GatC family. As to quaternary structure, heterotrimer of A, B and C subunits.

The enzyme catalyses L-glutamyl-tRNA(Gln) + L-glutamine + ATP + H2O = L-glutaminyl-tRNA(Gln) + L-glutamate + ADP + phosphate + H(+). The catalysed reaction is L-aspartyl-tRNA(Asn) + L-glutamine + ATP + H2O = L-asparaginyl-tRNA(Asn) + L-glutamate + ADP + phosphate + 2 H(+). Its function is as follows. Allows the formation of correctly charged Asn-tRNA(Asn) or Gln-tRNA(Gln) through the transamidation of misacylated Asp-tRNA(Asn) or Glu-tRNA(Gln) in organisms which lack either or both of asparaginyl-tRNA or glutaminyl-tRNA synthetases. The reaction takes place in the presence of glutamine and ATP through an activated phospho-Asp-tRNA(Asn) or phospho-Glu-tRNA(Gln). This Pseudomonas entomophila (strain L48) protein is Aspartyl/glutamyl-tRNA(Asn/Gln) amidotransferase subunit C.